Reading from the N-terminus, the 204-residue chain is B9 domain-containing protein 1 (204 aa).

The C2 B9-type domain maps to Phe9–Thr127. The interval Gly182–Gln204 is disordered.

The protein belongs to the B9D family. In terms of assembly, part of the tectonic-like complex (also named B9 complex).

It is found in the cytoplasm. The protein resides in the cytoskeleton. It localises to the cilium basal body. Its subcellular location is the cilium axoneme. Its function is as follows. Component of the tectonic-like complex, a complex localized at the transition zone of primary cilia and acting as a barrier that prevents diffusion of transmembrane proteins between the cilia and plasma membranes. Required for ciliogenesis and sonic hedgehog/SHH signaling. This chain is B9 domain-containing protein 1 (B9D1), found in Homo sapiens (Human).